We begin with the raw amino-acid sequence, 192 residues long: Orotate phosphoribosyltransferase (192 aa).

A 5-phospho-alpha-D-ribose 1-diphosphate-binding site is contributed by 116-124; it reads EDVVTTGKS. T120 and R148 together coordinate orotate.

It belongs to the purine/pyrimidine phosphoribosyltransferase family. PyrE subfamily. Homodimer. It depends on Mg(2+) as a cofactor.

It catalyses the reaction orotidine 5'-phosphate + diphosphate = orotate + 5-phospho-alpha-D-ribose 1-diphosphate. It functions in the pathway pyrimidine metabolism; UMP biosynthesis via de novo pathway; UMP from orotate: step 1/2. Catalyzes the transfer of a ribosyl phosphate group from 5-phosphoribose 1-diphosphate to orotate, leading to the formation of orotidine monophosphate (OMP). The protein is Orotate phosphoribosyltransferase of Clostridium perfringens (strain ATCC 13124 / DSM 756 / JCM 1290 / NCIMB 6125 / NCTC 8237 / Type A).